A 588-amino-acid polypeptide reads, in one-letter code: MKFPKNLFLVLFYTSWKFCDVCAYTPSHPLVYTKYGSVIGSVEYSRNSRAYMSFKGIPFAKPPVGDLRFKAPEPPEPWNFSINGTKDAPFCIQKNYFFSNPKVEGSEDCLYLNVYVPKTEGSQLLPVMVFIHWGGFFAGRGSSDYIGPEYIMDKDVILVTFNYRLGVFGFLSTLDDNAPGNFGLKDQVMALKFVHENIECFGGDNNRVTIFGQSAGSGSVNLHLISPASRGLFQQAISQSGAALDLWARPLNALQPNVTAALAAFTGCSAHIGSSKDIVDCLRKIEATKLAETADNFKYFSIEPLTPYSMVTEKQTDANPNPFLVQDPLESLKAGAFMKIPWMVGSVQDEGILRAAPLIRQPETLQTLNSNFEKLITQMLFLQFSAGANASSLLKNMTDFYLGGKSLIDVNNPKSVQGFINLYGDRAFHYGIYQTVILQLRKGHKPIWMYNFNYKGQYSYGDKFAATDKNVNFTWGVSHCDDLLYLFKSPGLFANLQKDNDILMSKTMVSFWTNFAIYGNPDPHQNLNWNSLNFEKPEGVKVADLNIMHITGNHETGKIAFDVEKSQILDRIAFWAKQSLLENFPDFG.

Positions M1 to A23 are cleaved as a signal peptide. 2 N-linked (GlcNAc...) asparagine glycosylation sites follow: N79 and N83. A disulfide bridge connects residues C91 and C109. S214 functions as the Acyl-ester intermediate in the catalytic mechanism. N257 is a glycosylation site (N-linked (GlcNAc...) asparagine). C268 and C281 form a disulfide bridge. Catalysis depends on E350, which acts as the Charge relay system. N-linked (GlcNAc...) asparagine glycosylation is found at N389, N396, and N472. The Charge relay system role is filled by H479.

Belongs to the type-B carboxylesterase/lipase family.

The protein resides in the secreted. The enzyme catalyses juvenile hormone III + H2O = juvenile hormone III carboxylate + methanol + H(+). Its activity is regulated as follows. Inhibited by 3-octylthio-1,1,1-trifluoro-2-propanone (OTFP), a specific inhibitor of juvenile hormone esterase (JHE), but not by diisopropyl fluorophosphate (DFP), a serine enzyme inhibitor. Its function is as follows. May function as a juvenile hormone (JH)-specific degradation enzyme in vivo decreasing JH activity. Hydrolyzes JH III in vitro. Hydrolyzes effectively also methyl hepthylthioacetothioate (HEPTAT), a synthetic substrate. Of the general esterase substrates, it has preference for 2-naphthyl acetate (2-NA) and shows a weak activity for 1-NA and 4-nitrophenylacetate (4-NPA). This Tribolium castaneum (Red flour beetle) protein is Juvenile hormone esterase.